Reading from the N-terminus, the 139-residue chain is Large ribosomal subunit protein bL21 (139 aa).

It belongs to the bacterial ribosomal protein bL21 family. As to quaternary structure, part of the 50S ribosomal subunit. Contacts protein L20.

This protein binds to 23S rRNA in the presence of protein L20. The sequence is that of Large ribosomal subunit protein bL21 from Prochlorococcus marinus (strain NATL2A).